The primary structure comprises 219 residues: 2-C-methyl-D-erythritol 4-phosphate cytidylyltransferase (219 aa).

This sequence belongs to the IspD/TarI cytidylyltransferase family. IspD subfamily.

The catalysed reaction is 2-C-methyl-D-erythritol 4-phosphate + CTP + H(+) = 4-CDP-2-C-methyl-D-erythritol + diphosphate. The protein operates within isoprenoid biosynthesis; isopentenyl diphosphate biosynthesis via DXP pathway; isopentenyl diphosphate from 1-deoxy-D-xylulose 5-phosphate: step 2/6. Catalyzes the formation of 4-diphosphocytidyl-2-C-methyl-D-erythritol from CTP and 2-C-methyl-D-erythritol 4-phosphate (MEP). The sequence is that of 2-C-methyl-D-erythritol 4-phosphate cytidylyltransferase from Bacteroides fragilis (strain ATCC 25285 / DSM 2151 / CCUG 4856 / JCM 11019 / LMG 10263 / NCTC 9343 / Onslow / VPI 2553 / EN-2).